The primary structure comprises 1679 residues: MGETEEERTSQAGQLFENFIQATTCKGTLQAFSVLCRQLELNPSDHRGFYSSLKTAVTFWKAKGLWGKLDKRAGHKEYSKGRACADTRCLIIGGGPCGFRTAIELALLGAKVVVIEKRDTFSRNNVLHLWPYTIHDLRNLGAKKFYGKFCAGSIDHISIRQLQLMLLKIALIVGVEVHVNVEFVKLLEPPEDQSTDGQGWRAEIRPADNPVSDYEFDVIIGADGRRSTLDGFRRKEFRGKLAIAITANFVNRNTTAEAKVEEISGVAFIFNQKFFLELKEETGIDLENIVYYKDNTHYFVMTAKKQSLLDKGVIINDYIETERLLAFDNVNQEALLSYAREAADFGTNYQLPSLDYAINHYGQPDVAMFDFTCMYASENAALVREKSHRQLLVALVGDSLLEPFWPMGTGCARGFLAAFDTAWMIKGWAQGKEPLDLLSERESIYRLLPQTTAENISKNFEQYTIDPATRYPNLNSSCVRPHQVRHLFISGEQDLSSLERSGQTRRSVSISRRESEVRPGRLLLWCQNQTQDYRGVNVTDLNTSWRSGLALCALIHRQRPELIDFDSLNEADCAKNNQLAFDVAEREFGIQPVTTGKEMDAERGPDKLIMVLYLSKFYEMFHKSTQSVTGLPKEIDANNGDCSSKTANSLYNSINHARKRIPKLDKKLEESDVNRKRKKASSHHEELMSCQTAPPAGEREEQKENKVRSMATQLLARFEENAPSCALRRQSDSESDSDADRPVSLDLTENPRFARPKIEPTHPSTTPDKAKWQPSPYLRLLESNTRSETLHTEHYVESQSSHRLTEIQSECQYSSVSSAYKSSERRPRSPLIPFTPTLSPMMHCLQQLEEQVIQQRKREPLNRKSIKERAQKLSSLFTGNPAQPQTDESSPAVSPSSPPQTIPESSTLSCLLSPAPSLTHKQCSEASETHLKADKHTEIRRVERLDPSKQRTVGKVSSAIGVKAATLAILYETDHRPNNPITLSLTEARRCAESGLVSVRKEFSASLGGSDTCVFCQKRVYIMERLSAEGFFFHRECFRCHICGCSLRLGAHTFDSQQGTFYCKMHFSQRKTSTRHRRGEIQDGGIRSSSITISNHTSTDGTRGQPSGGEFDSSTQQDLQTLPDSKEIISVSEVKDSSKKADPADSAPACPDSPLQKVKRSTAKGEITNKNILWKKKIRSTLPLVLMKKFHRGKPEDKTEVLAEEDGNSDFEEIHESLSSKKPSNPSTDSNCLPTKDNSSTPLDEIPKIPLYRTHVLPEYPKPSSSSPEPIVTSISSDPISFSPKKKLTLSLSEKEKLLNWDLTNPGKSGAEEQQQQHVKPSISLQHDHPEPTHPQPEPAPPLFGFQQWANNLRKSFSKGSNPVVLRRNRPMKARPLSEGSFNVGAVFQDEERCGSLVDEGEARPRTESEIASLLEQVALGSKTSRGTKDDMASLPPRKLNFFSSLRIKRVEGAEQSRGEGQKDILSILSRFRNKASAQQQQQQKSNSSSEDEQEPKLTHSGALQKKKEKIAIRQTKSDELKRLHRAQVIQRQLEEVEEKQRSLEEKGVALEKVLRGENGDDGSTDEAALLQTWFKLVLEKNKLSRYESELMIFAQELELEDTQSRLQQDLRRRMATEDCEKSASELVEEQNILVEIMKVVEKRDKLVSLLEEQRLKEKAEDRDLESLILSRGYQFHWT.

Residues Gly-2–Asp-494 are monooxygenase domain. FAD-binding positions include Cys-97, Cys-97–Asn-125, Glu-116, Arg-118, Arg-123, Asn-125, and Asp-398. Positions Glu-516–Glu-619 constitute a Calponin-homology (CH) domain. Positions Arg-658–Lys-679 match the Nuclear localization signal motif. 8 disordered regions span residues Ile-661–Trp-772, Ser-818–Leu-838, Ser-874–Thr-907, Ser-1073–Ala-1163, Lys-1194–Pro-1247, Glu-1259–Ser-1283, Asp-1302–Pro-1342, and Arg-1473–Glu-1509. Composition is skewed to basic and acidic residues over residues Pro-662–Asn-674 and Gly-697–Val-707. The segment covering Ser-874 to Glu-888 has biased composition (polar residues). Residues Asp-1011–Ser-1073 enclose the LIM zinc-binding domain. The span at Ile-1086 to Thr-1099 shows a compositional bias: low complexity. Polar residues predominate over residues Asp-1112–Pro-1123. Residues Glu-1133 to Pro-1143 are compositionally biased toward basic and acidic residues. The span at Ala-1144–Pro-1154 shows a compositional bias: low complexity. Residues Leu-1202 to Phe-1211 are compositionally biased toward acidic residues. Positions Ser-1220 to Pro-1242 are enriched in polar residues. Low complexity predominate over residues Glu-1259 to Pro-1270. The span at Asp-1302–Leu-1325 shows a compositional bias: polar residues. Over residues Thr-1333–Pro-1342 the composition is skewed to pro residues. A compositionally biased stretch (low complexity) spans Lys-1475–Ser-1489. The bMERB domain occupies Lys-1517–Ser-1667.

This sequence belongs to the Mical family. The cofactor is FAD.

It is found in the nucleus. The protein resides in the cytoplasm. It catalyses the reaction L-methionyl-[F-actin] + NADPH + O2 + H(+) = L-methionyl-(R)-S-oxide-[F-actin] + NADP(+) + H2O. Functionally, nuclear monooxygenase that promotes depolymerization of F-actin by mediating oxidation of specific methionine residues on actin and regulates the srf signaling. Acts by modifying nuclear actin subunits through the addition of oxygen to form methionine-sulfoxide, leading to promote actin filament severing and prevent repolymerization. Acts as a key regulator of the srf signaling pathway elicited by nerve growth factor and serum: mediates oxidation and subsequent depolymerization of nuclear actin, leading to increase mkl1/mrtf-a presence in the nucleus and promote srf:mkl1/mrtf-a-dependent gene transcription. This is [F-actin]-monooxygenase mical2b from Danio rerio (Zebrafish).